The following is a 171-amino-acid chain: Large ribosomal subunit protein uL10 (171 aa).

Belongs to the universal ribosomal protein uL10 family. In terms of assembly, part of the ribosomal stalk of the 50S ribosomal subunit. The N-terminus interacts with L11 and the large rRNA to form the base of the stalk. The C-terminus forms an elongated spine to which L12 dimers bind in a sequential fashion forming a multimeric L10(L12)X complex.

In terms of biological role, forms part of the ribosomal stalk, playing a central role in the interaction of the ribosome with GTP-bound translation factors. The chain is Large ribosomal subunit protein uL10 from Sphingopyxis alaskensis (strain DSM 13593 / LMG 18877 / RB2256) (Sphingomonas alaskensis).